The primary structure comprises 278 residues: Dermonecrotic toxin LlSicTox-alphaIII3ii (278 aa).

Residue His-5 is part of the active site. Mg(2+) contacts are provided by Glu-25 and Asp-27. His-40 (nucleophile) is an active-site residue. The cysteines at positions 44 and 50 are disulfide-linked. Position 84 (Asp-84) interacts with Mg(2+).

Belongs to the arthropod phospholipase D family. Class I subfamily. Requires Mg(2+) as cofactor. Expressed by the venom gland.

It localises to the secreted. The catalysed reaction is an N-(acyl)-sphingosylphosphocholine = an N-(acyl)-sphingosyl-1,3-cyclic phosphate + choline. It carries out the reaction an N-(acyl)-sphingosylphosphoethanolamine = an N-(acyl)-sphingosyl-1,3-cyclic phosphate + ethanolamine. The enzyme catalyses a 1-acyl-sn-glycero-3-phosphocholine = a 1-acyl-sn-glycero-2,3-cyclic phosphate + choline. It catalyses the reaction a 1-acyl-sn-glycero-3-phosphoethanolamine = a 1-acyl-sn-glycero-2,3-cyclic phosphate + ethanolamine. Its function is as follows. Dermonecrotic toxins cleave the phosphodiester linkage between the phosphate and headgroup of certain phospholipids (sphingolipid and lysolipid substrates), forming an alcohol (often choline) and a cyclic phosphate. This toxin acts on sphingomyelin (SM). It may also act on ceramide phosphoethanolamine (CPE), lysophosphatidylcholine (LPC) and lysophosphatidylethanolamine (LPE), but not on lysophosphatidylserine (LPS), and lysophosphatidylglycerol (LPG). It acts by transphosphatidylation, releasing exclusively cyclic phosphate products as second products. Induces dermonecrosis, hemolysis, increased vascular permeability, edema, inflammatory response, and platelet aggregation. This chain is Dermonecrotic toxin LlSicTox-alphaIII3ii, found in Loxosceles laeta (South American recluse spider).